A 116-amino-acid polypeptide reads, in one-letter code: MSNVYDKAQELKQALAESEEFKALKSLHTQIDQDDIAKRLLENFRQLQLDLQQKQMQGVQITEEEAQKAQQQFELVQQHELISKLMEEEQRLSVVIGDLNRIITEPLEEIYGNPNE.

It belongs to the UPF0342 family.

The chain is UPF0342 protein BH1149 from Halalkalibacterium halodurans (strain ATCC BAA-125 / DSM 18197 / FERM 7344 / JCM 9153 / C-125) (Bacillus halodurans).